The sequence spans 198 residues: dTTP/UTP pyrophosphatase (198 aa).

D75 (proton acceptor) is an active-site residue.

Belongs to the Maf family. YhdE subfamily. It depends on a divalent metal cation as a cofactor.

The protein resides in the cytoplasm. The enzyme catalyses dTTP + H2O = dTMP + diphosphate + H(+). The catalysed reaction is UTP + H2O = UMP + diphosphate + H(+). Nucleoside triphosphate pyrophosphatase that hydrolyzes dTTP and UTP. May have a dual role in cell division arrest and in preventing the incorporation of modified nucleotides into cellular nucleic acids. The sequence is that of dTTP/UTP pyrophosphatase from Wolbachia sp. subsp. Brugia malayi (strain TRS).